We begin with the raw amino-acid sequence, 508 residues long: UDP-N-acetylmuramyl-tripeptide synthetase (508 aa).

S35 is a binding site for UDP-N-acetyl-alpha-D-muramoyl-L-alanyl-D-glutamate. ATP is bound at residue 118-124 (GTDGKSS). UDP-N-acetyl-alpha-D-muramoyl-L-alanyl-D-glutamate contacts are provided by residues 163-164 (ST), T190, and R200. An N6-carboxylysine modification is found at K232.

Belongs to the MurCDEF family. MurE subfamily. In terms of processing, carboxylation is probably crucial for Mg(2+) binding and, consequently, for the gamma-phosphate positioning of ATP.

The protein localises to the cytoplasm. It functions in the pathway cell wall biogenesis; peptidoglycan biosynthesis. Catalyzes the addition of an amino acid to the nucleotide precursor UDP-N-acetylmuramoyl-L-alanyl-D-glutamate (UMAG) in the biosynthesis of bacterial cell-wall peptidoglycan. The polypeptide is UDP-N-acetylmuramyl-tripeptide synthetase (Borrelia garinii subsp. bavariensis (strain ATCC BAA-2496 / DSM 23469 / PBi) (Borreliella bavariensis)).